Consider the following 312-residue polypeptide: DNA-directed RNA polymerase subunit alpha (312 aa).

The interval 1–226 is alpha N-terminal domain (alpha-NTD); sequence MIEFEKPNIT…EHLDLFTDLT (226 aa). Residues 244-312 are alpha C-terminal domain (alpha-CTD); that stretch reads DHVLERTIEE…DLGLGLKNDK (69 aa).

It belongs to the RNA polymerase alpha chain family. In terms of assembly, homodimer. The RNAP catalytic core consists of 2 alpha, 1 beta, 1 beta' and 1 omega subunit. When a sigma factor is associated with the core the holoenzyme is formed, which can initiate transcription.

It catalyses the reaction RNA(n) + a ribonucleoside 5'-triphosphate = RNA(n+1) + diphosphate. Functionally, DNA-dependent RNA polymerase catalyzes the transcription of DNA into RNA using the four ribonucleoside triphosphates as substrates. This chain is DNA-directed RNA polymerase subunit alpha, found in Streptococcus gordonii (strain Challis / ATCC 35105 / BCRC 15272 / CH1 / DL1 / V288).